The chain runs to 394 residues: Dual-specificity RNA methyltransferase RlmN (394 aa).

The active-site Proton acceptor is Glu115. One can recognise a Radical SAM core domain in the interval 121–363; it reads DEGRGTLCVS…SPIRTPRGED (243 aa). Residues Cys128 and Cys368 are joined by a disulfide bond. Residues Cys135, Cys139, and Cys142 each coordinate [4Fe-4S] cluster. Residues 194–195, Ser226, 248–250, and Asn325 contribute to the S-adenosyl-L-methionine site; these read GE and SFH. Cys368 acts as the S-methylcysteine intermediate in catalysis.

The protein belongs to the radical SAM superfamily. RlmN family. [4Fe-4S] cluster serves as cofactor.

It localises to the cytoplasm. The enzyme catalyses adenosine(2503) in 23S rRNA + 2 reduced [2Fe-2S]-[ferredoxin] + 2 S-adenosyl-L-methionine = 2-methyladenosine(2503) in 23S rRNA + 5'-deoxyadenosine + L-methionine + 2 oxidized [2Fe-2S]-[ferredoxin] + S-adenosyl-L-homocysteine. It catalyses the reaction adenosine(37) in tRNA + 2 reduced [2Fe-2S]-[ferredoxin] + 2 S-adenosyl-L-methionine = 2-methyladenosine(37) in tRNA + 5'-deoxyadenosine + L-methionine + 2 oxidized [2Fe-2S]-[ferredoxin] + S-adenosyl-L-homocysteine. Its function is as follows. Specifically methylates position 2 of adenine 2503 in 23S rRNA and position 2 of adenine 37 in tRNAs. m2A2503 modification seems to play a crucial role in the proofreading step occurring at the peptidyl transferase center and thus would serve to optimize ribosomal fidelity. In Roseobacter denitrificans (strain ATCC 33942 / OCh 114) (Erythrobacter sp. (strain OCh 114)), this protein is Dual-specificity RNA methyltransferase RlmN.